The primary structure comprises 368 residues: G-protein coupled receptor 183-A (368 aa).

The Extracellular portion of the chain corresponds to 1–27 (METTSANFTQNDSNVCTNLYNHRGWAQ). N-linked (GlcNAc...) asparagine glycans are attached at residues asparagine 7 and asparagine 11. A helical membrane pass occupies residues 28–53 (YFLPAMYSLICIVGLLGNVLALHVIW). At 54–73 (PNLKKINSTTLYSANLVVSD) the chain is on the cytoplasmic side. Residues 74–91 (ILFSLALPLRVVYYARGF) form a helical membrane-spanning segment. Topologically, residues 92 to 101 (DWPMGEGLCK) are extracellular. Residues cysteine 100 and cysteine 178 are joined by a disulfide bond. Residues 102–123 (AVALLFYINMYAGVNFMTCLSV) traverse the membrane as a helical segment. Residues 124-145 (DRFIAVVLPLRFSRFRKVQKVR) lie on the Cytoplasmic side of the membrane. A helical transmembrane segment spans residues 146–164 (YICGVVWVVVLMQTLPLLS). Residues 165–189 (MPMTNIEQSGHITCMEYPNFEKIDN) lie on the Extracellular side of the membrane. Residues 190 to 212 (LPVMLIGAVVLGFGIPVITILVC) form a helical membrane-spanning segment. Over 213–238 (YTALCLKLRHLAKSNKLTEKSGRSSK) the chain is Cytoplasmic. A helical membrane pass occupies residues 239–262 (AIGVICTVILVFVVCYSPYHVDLL). At 263–282 (QYMIKKLRYDPDCSELHKFQ) the chain is on the extracellular side. Residues 283–307 (ISLHITVCFMNLNSCLDPFIYFFAC) traverse the membrane as a helical segment. At 308 to 368 (KGYKKKVLKL…SSVLLNSLEQ (61 aa)) the chain is on the cytoplasmic side.

The protein belongs to the G-protein coupled receptor 1 family.

It localises to the cell membrane. In terms of biological role, G-protein coupled receptor expressed in lymphocytes that acts as a chemotactic receptor for B-cells, T-cells, splenic dendritic cells, monocytes/macrophages and astrocytes. Receptor for oxysterol 7-alpha,25-dihydroxycholesterol (7-alpha,25-OHC) and other related oxysterols. Mediates cell positioning and movement of a number of cells by binding the 7-alpha,25-OHC ligand that forms a chemotactic gradient. Binding of 7-alpha,25-OHC mediates the correct localization of B-cells during humoral immune responses. The polypeptide is G-protein coupled receptor 183-A (gpr183a) (Danio rerio (Zebrafish)).